A 317-amino-acid polypeptide reads, in one-letter code: Transaldolase (317 aa).

The active-site Schiff-base intermediate with substrate is the Lys-126.

The protein belongs to the transaldolase family. Type 1 subfamily. Homodimer.

The protein localises to the cytoplasm. The enzyme catalyses D-sedoheptulose 7-phosphate + D-glyceraldehyde 3-phosphate = D-erythrose 4-phosphate + beta-D-fructose 6-phosphate. The protein operates within carbohydrate degradation; pentose phosphate pathway; D-glyceraldehyde 3-phosphate and beta-D-fructose 6-phosphate from D-ribose 5-phosphate and D-xylulose 5-phosphate (non-oxidative stage): step 2/3. In terms of biological role, transaldolase is important for the balance of metabolites in the pentose-phosphate pathway. This is Transaldolase from Burkholderia ambifaria (strain ATCC BAA-244 / DSM 16087 / CCUG 44356 / LMG 19182 / AMMD) (Burkholderia cepacia (strain AMMD)).